Consider the following 588-residue polypeptide: NADP-dependent malic enzyme 3 (588 aa).

Gly-2 is modified (N-acetylglycine). Catalysis depends on Tyr-136, which acts as the Proton donor. Residue Arg-189 coordinates NADP(+). Lys-207 functions as the Proton acceptor in the catalytic mechanism. Positions 279, 280, and 303 each coordinate a divalent metal cation. Residues Asp-303, 332 to 348 (LFLG…ELIA), and Asn-444 contribute to the NADP(+) site.

This sequence belongs to the malic enzymes family. In terms of assembly, homohexamers and homooctamers. Mg(2+) is required as a cofactor. Mn(2+) serves as cofactor. Mostly expressed in flowers, and, to a lower extent, in stems. In leaves and stems, restricted to the trichomes and trichome basal cells. Also present in the stipules flanking the base of the inflorescence bract leaves and in the meristematic zone of developing lateral roots. In flowers, present in pollen and the abscission zone of developing siliques.

The protein localises to the cytoplasm. It carries out the reaction (S)-malate + NADP(+) = pyruvate + CO2 + NADPH. It catalyses the reaction oxaloacetate + H(+) = pyruvate + CO2. Slightly activated by succinate and aspartate. Repressed by fumarate, malate, oxaloacetate and glucose. This is NADP-dependent malic enzyme 3 (NADP-ME3) from Arabidopsis thaliana (Mouse-ear cress).